Here is a 305-residue protein sequence, read N- to C-terminus: tRNA uridine(34) hydroxylase (305 aa).

In terms of domain architecture, Rhodanese spans 125–219 (ADENTVVVDT…YLEEVPREQS (95 aa)). Residue Cys179 is the Cysteine persulfide intermediate of the active site.

This sequence belongs to the TrhO family.

The enzyme catalyses uridine(34) in tRNA + AH2 + O2 = 5-hydroxyuridine(34) in tRNA + A + H2O. In terms of biological role, catalyzes oxygen-dependent 5-hydroxyuridine (ho5U) modification at position 34 in tRNAs. This is tRNA uridine(34) hydroxylase from Brucella suis (strain ATCC 23445 / NCTC 10510).